A 257-amino-acid chain; its full sequence is NAD-capped RNA hydrolase NudC (257 aa).

R69 is a binding site for substrate. Zn(2+)-binding residues include C98 and C101. Position 111 (E111) interacts with substrate. Zn(2+) contacts are provided by C116 and C119. Position 124 (Y124) interacts with substrate. In terms of domain architecture, Nudix hydrolase spans P125 to T248. Residues A158, E174, and E178 each coordinate a divalent metal cation. A Nudix box motif is present at residues G159–G180. Substrate is bound at residue Q192–S199. E219 is an a divalent metal cation binding site. A241 serves as a coordination point for substrate.

This sequence belongs to the Nudix hydrolase family. NudC subfamily. Homodimer. Requires Mg(2+) as cofactor. It depends on Mn(2+) as a cofactor. Zn(2+) is required as a cofactor.

It carries out the reaction a 5'-end NAD(+)-phospho-ribonucleoside in mRNA + H2O = a 5'-end phospho-adenosine-phospho-ribonucleoside in mRNA + beta-nicotinamide D-ribonucleotide + 2 H(+). The catalysed reaction is NAD(+) + H2O = beta-nicotinamide D-ribonucleotide + AMP + 2 H(+). The enzyme catalyses NADH + H2O = reduced beta-nicotinamide D-ribonucleotide + AMP + 2 H(+). In terms of biological role, mRNA decapping enzyme that specifically removes the nicotinamide adenine dinucleotide (NAD) cap from a subset of mRNAs by hydrolyzing the diphosphate linkage to produce nicotinamide mononucleotide (NMN) and 5' monophosphate mRNA. The NAD-cap is present at the 5'-end of some mRNAs and stabilizes RNA against 5'-processing. Has preference for mRNAs with a 5'-end purine. Catalyzes the hydrolysis of a broad range of dinucleotide pyrophosphates. This chain is NAD-capped RNA hydrolase NudC, found in Salmonella choleraesuis (strain SC-B67).